Here is a 121-residue protein sequence, read N- to C-terminus: Small ribosomal subunit protein uS13 (121 aa).

The tract at residues 93–121 (RGLPMRGQRTRTNARTRKGPRKAAQSLKK) is disordered.

This sequence belongs to the universal ribosomal protein uS13 family. Part of the 30S ribosomal subunit. Forms a loose heterodimer with protein S19. Forms two bridges to the 50S subunit in the 70S ribosome.

In terms of biological role, located at the top of the head of the 30S subunit, it contacts several helices of the 16S rRNA. In the 70S ribosome it contacts the 23S rRNA (bridge B1a) and protein L5 of the 50S subunit (bridge B1b), connecting the 2 subunits; these bridges are implicated in subunit movement. Contacts the tRNAs in the A and P-sites. The polypeptide is Small ribosomal subunit protein uS13 (Albidiferax ferrireducens (strain ATCC BAA-621 / DSM 15236 / T118) (Rhodoferax ferrireducens)).